We begin with the raw amino-acid sequence, 692 residues long: Elongation factor G (692 aa).

The tr-type G domain maps to 9-284; it reads HMVRNIGIAA…AVVDYLPAPD (276 aa). GTP is bound by residues 18 to 25, 82 to 86, and 136 to 139; these read AHIDAGKT, DTPGH, and NKMD.

This sequence belongs to the TRAFAC class translation factor GTPase superfamily. Classic translation factor GTPase family. EF-G/EF-2 subfamily.

The protein resides in the cytoplasm. Its function is as follows. Catalyzes the GTP-dependent ribosomal translocation step during translation elongation. During this step, the ribosome changes from the pre-translocational (PRE) to the post-translocational (POST) state as the newly formed A-site-bound peptidyl-tRNA and P-site-bound deacylated tRNA move to the P and E sites, respectively. Catalyzes the coordinated movement of the two tRNA molecules, the mRNA and conformational changes in the ribosome. This is Elongation factor G from Campylobacter curvus (strain 525.92).